Here is a 317-residue protein sequence, read N- to C-terminus: D-alanine--D-alanine ligase (317 aa).

Positions 103–299 (KHIFRSLNID…FNELVKIIIE (197 aa)) constitute an ATP-grasp domain. 130–183 (KIDYPYVLKPINEGSSIGVYIIFSHEDYLELKDNSSTIMEKMIVEEYIPGIELH) is an ATP binding site. Mg(2+) contacts are provided by D251, E265, and N267.

This sequence belongs to the D-alanine--D-alanine ligase family. Mg(2+) is required as a cofactor. Requires Mn(2+) as cofactor.

It is found in the cytoplasm. The catalysed reaction is 2 D-alanine + ATP = D-alanyl-D-alanine + ADP + phosphate + H(+). It participates in cell wall biogenesis; peptidoglycan biosynthesis. Its function is as follows. Cell wall formation. The chain is D-alanine--D-alanine ligase from Wolbachia sp. subsp. Drosophila simulans (strain wRi).